The following is a 238-amino-acid chain: Ribitol-5-phosphate cytidylyltransferase 1 (238 aa).

CTP-binding positions include 7 to 10 (LAGG) and 81 to 87 (GSDRNDT).

This sequence belongs to the IspD/TarI cytidylyltransferase family. TarI subfamily.

The catalysed reaction is D-ribitol 5-phosphate + CTP + H(+) = CDP-L-ribitol + diphosphate. It participates in cell wall biogenesis; poly(ribitol phosphate) teichoic acid biosynthesis. Functionally, catalyzes the transfer of the cytidylyl group of CTP to D-ribitol 5-phosphate. The sequence is that of Ribitol-5-phosphate cytidylyltransferase 1 from Staphylococcus aureus (strain bovine RF122 / ET3-1).